A 337-amino-acid chain; its full sequence is Holliday junction branch migration complex subunit RuvB (337 aa).

A disordered region spans residues 1-27 (MIEADRLVHAQPQGTEERDEQIDRAMR). Residues 4–187 (ADRLVHAQPQ…FGIPLRLEFY (184 aa)) form a large ATPase domain (RuvB-L) region. ATP-binding positions include arginine 27, glycine 68, lysine 71, threonine 72, threonine 73, 134–136 (EDY), arginine 177, tyrosine 187, and arginine 224. A Mg(2+)-binding site is contributed by threonine 72. Residues 188-258 (NVKDLSSIVT…VAESALDMLD (71 aa)) form a small ATPAse domain (RuvB-S) region. The tract at residues 261 to 337 (VEGFDYMDRK…YQHFNLIQPE (77 aa)) is head domain (RuvB-H). Arginine 297, arginine 316, and arginine 321 together coordinate DNA.

It belongs to the RuvB family. As to quaternary structure, homohexamer. Forms an RuvA(8)-RuvB(12)-Holliday junction (HJ) complex. HJ DNA is sandwiched between 2 RuvA tetramers; dsDNA enters through RuvA and exits via RuvB. An RuvB hexamer assembles on each DNA strand where it exits the tetramer. Each RuvB hexamer is contacted by two RuvA subunits (via domain III) on 2 adjacent RuvB subunits; this complex drives branch migration. In the full resolvosome a probable DNA-RuvA(4)-RuvB(12)-RuvC(2) complex forms which resolves the HJ.

The protein resides in the cytoplasm. It catalyses the reaction ATP + H2O = ADP + phosphate + H(+). Functionally, the RuvA-RuvB-RuvC complex processes Holliday junction (HJ) DNA during genetic recombination and DNA repair, while the RuvA-RuvB complex plays an important role in the rescue of blocked DNA replication forks via replication fork reversal (RFR). RuvA specifically binds to HJ cruciform DNA, conferring on it an open structure. The RuvB hexamer acts as an ATP-dependent pump, pulling dsDNA into and through the RuvAB complex. RuvB forms 2 homohexamers on either side of HJ DNA bound by 1 or 2 RuvA tetramers; 4 subunits per hexamer contact DNA at a time. Coordinated motions by a converter formed by DNA-disengaged RuvB subunits stimulates ATP hydrolysis and nucleotide exchange. Immobilization of the converter enables RuvB to convert the ATP-contained energy into a lever motion, pulling 2 nucleotides of DNA out of the RuvA tetramer per ATP hydrolyzed, thus driving DNA branch migration. The RuvB motors rotate together with the DNA substrate, which together with the progressing nucleotide cycle form the mechanistic basis for DNA recombination by continuous HJ branch migration. Branch migration allows RuvC to scan DNA until it finds its consensus sequence, where it cleaves and resolves cruciform DNA. This is Holliday junction branch migration complex subunit RuvB from Shewanella loihica (strain ATCC BAA-1088 / PV-4).